A 306-amino-acid chain; its full sequence is Heme A synthase (306 aa).

The Cytoplasmic segment spans residues Met-1 to Arg-5. The helical transmembrane segment at Ala-6–Thr-26 threads the bilayer. Residues Ser-27 to Glu-56 lie on the Extracellular side of the membrane. An intrachain disulfide couples Cys-34 to Cys-41. The active site involves Glu-56. A helical membrane pass occupies residues Phe-57–Val-77. His-59 contributes to the heme o binding site. The Cytoplasmic portion of the chain corresponds to Ala-78 to Arg-89. A helical transmembrane segment spans residues Leu-90–Leu-110. The Extracellular portion of the chain corresponds to Arg-111 to Leu-116. The chain crosses the membrane as a helical span at residues Val-117–Val-137. Residue His-121 participates in heme o binding. Residues Ala-138–Gln-164 are Cytoplasmic-facing. A helical membrane pass occupies residues Ile-165 to Leu-185. Topologically, residues Gly-186–Tyr-206 are extracellular. Cys-191 and Cys-197 are disulfide-bonded. A helical membrane pass occupies residues Gly-207 to Leu-227. His-215 serves as a coordination point for heme b. Over Arg-228–Ala-247 the chain is Cytoplasmic. A helical membrane pass occupies residues Trp-248–Leu-268. Over Asn-269–Thr-277 the chain is Extracellular. A heme b-binding site is contributed by His-276. A helical transmembrane segment spans residues Gly-278–Gly-298. The Cytoplasmic portion of the chain corresponds to Arg-299–Ala-306.

This sequence belongs to the COX15/CtaA family. Type 1 subfamily. As to quaternary structure, interacts with CtaB. Heme b serves as cofactor.

It is found in the cell membrane. The enzyme catalyses Fe(II)-heme o + 2 A + H2O = Fe(II)-heme a + 2 AH2. The protein operates within porphyrin-containing compound metabolism; heme A biosynthesis; heme A from heme O: step 1/1. Catalyzes the conversion of heme O to heme A by two successive hydroxylations of the methyl group at C8. The first hydroxylation forms heme I, the second hydroxylation results in an unstable dihydroxymethyl group, which spontaneously dehydrates, resulting in the formyl group of heme A. The polypeptide is Heme A synthase (Symbiobacterium thermophilum (strain DSM 24528 / JCM 14929 / IAM 14863 / T)).